Here is a 338-residue protein sequence, read N- to C-terminus: D-erythrose-4-phosphate dehydrogenase (338 aa).

An NAD(+)-binding site is contributed by 12-13 (RI). Residues 154 to 156 (SCT), Arg200, 213 to 214 (TK), and Arg236 each bind substrate. Cys155 acts as the Nucleophile in catalysis. Asn318 is a binding site for NAD(+).

Belongs to the glyceraldehyde-3-phosphate dehydrogenase family. Epd subfamily. Homotetramer.

The protein resides in the cytoplasm. It catalyses the reaction D-erythrose 4-phosphate + NAD(+) + H2O = 4-phospho-D-erythronate + NADH + 2 H(+). It participates in cofactor biosynthesis; pyridoxine 5'-phosphate biosynthesis; pyridoxine 5'-phosphate from D-erythrose 4-phosphate: step 1/5. Functionally, catalyzes the NAD-dependent conversion of D-erythrose 4-phosphate to 4-phosphoerythronate. The chain is D-erythrose-4-phosphate dehydrogenase from Pectobacterium atrosepticum (strain SCRI 1043 / ATCC BAA-672) (Erwinia carotovora subsp. atroseptica).